Here is a 131-residue protein sequence, read N- to C-terminus: uncharacterized protein (131 aa).

The next 2 helical transmembrane spans lie at 61–81 (LLLLPTIYIRSLVSYNVYLPI) and 102–122 (VCSIASLFILVLFLFCFALRY).

It localises to the membrane. This is an uncharacterized protein from Saccharomyces cerevisiae (strain ATCC 204508 / S288c) (Baker's yeast).